Here is a 65-residue protein sequence, read N- to C-terminus: Movement protein TGBp3 (65 aa).

Residues 1–3 are Lumenal-facing; the sequence is MQA. The chain crosses the membrane as a helical span at residues 4–24; the sequence is SGLILVALFSAVVSYLALLHL. At 25–65 the chain is on the cytoplasmic side; the sequence is SSSSSSCVVVVTGESFRISGCDFTEEFIGFAKTLRVANSQP.

It belongs to the Tymovirales TGBp3 protein family.

It is found in the host endoplasmic reticulum membrane. Plays a role in viral cell-to-cell propagation, by facilitating genome transport to neighboring plant cells through plasmosdesmata. May induce the formation of granular vesicles derived from the Endoplasmic reticulum, which align on actin filaments. The polypeptide is Movement protein TGBp3 (Carnation latent virus (CLV)).